A 332-amino-acid chain; its full sequence is 2,3-diketo-L-gulonate reductase (332 aa).

His-44 functions as the Proton donor in the catalytic mechanism. NAD(+)-binding positions include 168 to 174, 224 to 225, and 304 to 306; these read ITMVDMS, WK, and GHE.

It belongs to the LDH2/MDH2 oxidoreductase family. DlgD subfamily. In terms of assembly, homodimer.

Its subcellular location is the cytoplasm. The catalysed reaction is 3-dehydro-L-gulonate + NAD(+) = 2,3-dioxo-L-gulonate + NADH + H(+). It catalyses the reaction 3-dehydro-L-gulonate + NADP(+) = 2,3-dioxo-L-gulonate + NADPH + H(+). In terms of biological role, catalyzes the reduction of 2,3-diketo-L-gulonate in the presence of NADH, to form 3-keto-L-gulonate. This is 2,3-diketo-L-gulonate reductase from Salmonella paratyphi A (strain ATCC 9150 / SARB42).